We begin with the raw amino-acid sequence, 530 residues long: UDP-glucuronosyltransferase 1A8 (530 aa).

The first 25 residues, methionine 1–alanine 25, serve as a signal peptide directing secretion. N-linked (GlcNAc...) asparagine glycans are attached at residues asparagine 71, asparagine 292, and asparagine 430. A helical transmembrane segment spans residues valine 488 to tyrosine 504.

This sequence belongs to the UDP-glycosyltransferase family. As to quaternary structure, homodimers. Homooligomer. Interacts with UGT1A1, UGT1A3, UGT1A4, UGT1A6, UGT1A7, UGT1A8, UGT1A9 and UGT1A10 to form heterodimers.

The protein resides in the endoplasmic reticulum membrane. The catalysed reaction is glucuronate acceptor + UDP-alpha-D-glucuronate = acceptor beta-D-glucuronoside + UDP + H(+). The enzyme catalyses 17beta-estradiol + UDP-alpha-D-glucuronate = 17beta-estradiol 3-O-(beta-D-glucuronate) + UDP + H(+). It carries out the reaction 17alpha-estradiol + UDP-alpha-D-glucuronate = 17alpha-estradiol 3-O-(beta-D-glucuronate) + UDP + H(+). It catalyses the reaction estrone + UDP-alpha-D-glucuronate = estrone 3-O-(beta-D-glucuronate) + UDP + H(+). The catalysed reaction is 16alpha,17alpha-estriol + UDP-alpha-D-glucuronate = 16alpha,17alpha-estriol 3-O-(beta-D-glucuronate) + UDP + H(+). The enzyme catalyses 2-hydroxy-17beta-estradiol + UDP-alpha-D-glucuronate = 2-hydroxy-17beta-estradiol 3-O-(beta-D-glucuronate) + UDP + H(+). It carries out the reaction 2-hydroxy-17beta-estradiol + UDP-alpha-D-glucuronate = 17beta-estradiol 2-O-(beta-D-glucuronate) + UDP + H(+). It catalyses the reaction 2-hydroxyestrone + UDP-alpha-D-glucuronate = 2-hydroxyestrone 3-O-(beta-D-glucuronate) + UDP + H(+). The catalysed reaction is 4-hydroxy-17beta-estradiol + UDP-alpha-D-glucuronate = 4-hydroxy-17beta-estradiol 3-O-(beta-D-glucuronate) + UDP + H(+). The enzyme catalyses 4-hydroxy-17beta-estradiol + UDP-alpha-D-glucuronate = 17beta-estradiol 4-O-(beta-D-glucuronate) + UDP + H(+). It carries out the reaction 4-hydroxyestrone + UDP-alpha-D-glucuronate = 4-hydroxyestrone 3-O-(beta-D-glucuronate) + UDP + H(+). It catalyses the reaction 4-hydroxyestrone + UDP-alpha-D-glucuronate = estrone 4-O-(beta-D-glucuronate) + UDP + H(+). The catalysed reaction is 2-methoxy-17beta-estradiol + UDP-alpha-D-glucuronate = 2-methoxy-17beta-estradiol 3-O-(beta-D-glucuronate) + UDP + H(+). The enzyme catalyses 2-methoxyestrone + UDP-alpha-D-glucuronate = 2-methoxyestrone 3-O-(beta-D-glucuronate) + UDP + H(+). It carries out the reaction 4-methoxy-17beta-estradiol + UDP-alpha-D-glucuronate = 4-methoxy-17beta-estradiol 3-O-(beta-D-glucuronate) + UDP + H(+). It catalyses the reaction 4-methoxyestrone + UDP-alpha-D-glucuronate = 4-methoxyestrone 3-O-(beta-D-glucuronate) + UDP + H(+). The catalysed reaction is 17beta-hydroxy-5alpha-androstan-3-one + UDP-alpha-D-glucuronate = 5alpha-dihydrotestosterone 17-O-(beta-D-glucuronate) + UDP + H(+). The enzyme catalyses 5alpha-dihydrotestosterone 17-O-(beta-D-glucuronate) + UDP-alpha-D-glucuronate = 5alpha-dihydrotestosterone 17-O-[beta-D-glucuronosyl-(1-&gt;2)-glucuronate] + UDP + H(+). It carries out the reaction prunetin + UDP-alpha-D-glucuronate = prunetin-4'-O-beta-D-glucuronide + UDP. It catalyses the reaction prunetin + UDP-alpha-D-glucuronate = prunetin-5-O-beta-D-glucuronide + UDP. The catalysed reaction is (E)-ferulate + UDP-alpha-D-glucuronate = (E)-4-O-(beta-D-glucuronosyl)-ferulate + UDP + H(+). The enzyme catalyses (E)-ferulate + UDP-alpha-D-glucuronate = (E)-ferulic acid beta-D-glucuronate ester + UDP. It carries out the reaction candesartan + UDP-alpha-D-glucuronate = candesartan O-beta-D-glucuronoside + UDP. It catalyses the reaction mycophenolate + UDP-alpha-D-glucuronate = mycophenolate 7-O-beta-D-glucuronide + UDP + H(+). Functionally, UDP-glucuronosyltransferase (UGT) that catalyzes phase II biotransformation reactions in which lipophilic substrates are conjugated with glucuronic acid to increase the metabolite's water solubility, thereby facilitating excretion into either the urine or bile. Essential for the elimination and detoxification of drugs, xenobiotics and endogenous compounds. Catalyzes the glucuronidation of endogenous steroid hormones such as androgens and estrogens. Produces dihydrotestosterone (DHT) diglucuronide from the DHT after two subsequent glucoronidation steps. Involved in the glucuronidation of the phytochemical ferulic acid at the phenolic or the carboxylic acid group. Also catalyzes the glucuronidation of the isoflavones genistein, daidzein, glycitein, formononetin, biochanin A and prunetin, which are phytoestrogens with anticancer and cardiovascular properties. Involved in the glucuronidation of the AGTR1 angiotensin receptor antagonist caderastan, a drug which can inhibit the effect of angiotensin II. Also metabolizes mycophenolate, an immunosuppressive agent. This chain is UDP-glucuronosyltransferase 1A8, found in Rattus norvegicus (Rat).